We begin with the raw amino-acid sequence, 346 residues long: NADH-ubiquinone oxidoreductase chain 2 (346 aa).

11 consecutive transmembrane segments (helical) span residues 1–21 (MNPH…TITI), 25–45 (HWVL…PLIS), 60–80 (FLTQ…NAWA), 95–115 (CLLL…HFWF), 124–144 (LMTA…LLLM), 149–169 (LNPA…GWMG), 178–195 (ILAF…IILV), 200–219 (LALL…FMAL), 242–262 (ATLM…GFMP), 274–294 (EMTP…FFYL), and 326–346 (AILA…HAIV).

The protein belongs to the complex I subunit 2 family.

It localises to the mitochondrion inner membrane. The enzyme catalyses a ubiquinone + NADH + 5 H(+)(in) = a ubiquinol + NAD(+) + 4 H(+)(out). Its function is as follows. Core subunit of the mitochondrial membrane respiratory chain NADH dehydrogenase (Complex I) that is believed to belong to the minimal assembly required for catalysis. Complex I functions in the transfer of electrons from NADH to the respiratory chain. The immediate electron acceptor for the enzyme is believed to be ubiquinone. The sequence is that of NADH-ubiquinone oxidoreductase chain 2 (MT-ND2) from Mareca americana (American wigeon).